Reading from the N-terminus, the 198-residue chain is uncharacterized protein (198 aa).

A disordered region spans residues Glu72–Glu95. Acidic residues predominate over residues Glu75–Asp94. A coiled-coil region spans residues Glu106–Lys136.

This is an uncharacterized protein from Plasmodium falciparum (isolate 3D7).